The sequence spans 582 residues: MLLALLRQHIRPYRRLVAMLMMLQLVSTLASLYLPTVNAAIVDDGVAKGDTATIVRLGAVMLGVTGLQVLCAIGAVYLGSRTGAGFGRDLRSAMFEHIITFSERETARFGAPTLLTRSTNDVRQILFLVQMTATVLVTAPIMCVGGIIMAIHQEAALTWLLLVSVPILAVANYWIISHMLPLFRRMQSLIDGINRVMRDQLSGVRVVRAFTREGYERDKFAQANTALSNAALSAGNWQALMLPVTTLTINASSVALIWFGGLRIDSGQMQVGSLIAFLSYFAQILMAVLMATMTLAVLPRASVCAERITEVLSTPAALGNPDNPKFPTDGVTGVVRLAGATFTYPGADCPVLQDISLTARPGTTTAIVGSTGSGKSTLVSLICRLYDVTAGAVLVDGIDVREYHTERLWSAIGLVPQRSYLFSGTVADNLRYGGGPDQVVTEQEMWEALRVAAADGFVQTDGLQTRVAQGGVNFSGGQRQRLAIARAVIRRPAIYVFDDAFSALDVHTDAKVHASLRQVSGDATIIVVTQRISNAAQADQVIVVDNGKIVGTGTHETLLADCPTYAEFAASQSLSATVGGVG.

Helical transmembrane passes span 17-37 (VAML…LPTV), 57-77 (LGAV…GAVY), 131-151 (MTAT…IMAI), 156-176 (ALTW…YWII), 239-259 (ALML…LIWF), and 271-291 (VGSL…VLMA). The ABC transmembrane type-1 domain occupies 17 to 300 (VAMLMMLQLV…ATMTLAVLPR (284 aa)). Positions 335–571 (VRLAGATFTY…CPTYAEFAAS (237 aa)) constitute an ABC transporter domain. 369 to 376 (GSTGSGKS) contacts ATP.

It belongs to the ABC transporter superfamily. MsbA family.

It localises to the cell membrane. This is an uncharacterized protein from Mycobacterium bovis (strain ATCC BAA-935 / AF2122/97).